The following is a 393-amino-acid chain: Branched-chain amino acid aminotransferase 1, mitochondrial (393 aa).

The N-terminal 34 residues, 1-34 (MIHRGLWLHNLVQSYRVGSSSSSSTLFKLVYRYN), are a transit peptide targeting the mitochondrion. Position 138 (R138) interacts with pyridoxal 5'-phosphate. The active-site Proton acceptor is K240. K240 carries the N6-(pyridoxal phosphate)lysine modification. Pyridoxal 5'-phosphate is bound at residue E276.

This sequence belongs to the class-IV pyridoxal-phosphate-dependent aminotransferase family. Requires pyridoxal 5'-phosphate as cofactor. In terms of tissue distribution, expressed specifically in lupulin glands.

It localises to the mitochondrion. It catalyses the reaction L-isoleucine + 2-oxoglutarate = (S)-3-methyl-2-oxopentanoate + L-glutamate. The catalysed reaction is L-leucine + 2-oxoglutarate = 4-methyl-2-oxopentanoate + L-glutamate. The enzyme catalyses L-valine + 2-oxoglutarate = 3-methyl-2-oxobutanoate + L-glutamate. It functions in the pathway amino-acid biosynthesis; L-isoleucine biosynthesis; L-isoleucine from 2-oxobutanoate: step 4/4. The protein operates within amino-acid biosynthesis; L-leucine biosynthesis; L-leucine from 3-methyl-2-oxobutanoate: step 4/4. Its pathway is amino-acid biosynthesis; L-valine biosynthesis; L-valine from pyruvate: step 4/4. Converts 2-oxo acids to branched-chain amino acids (BCAA). Shows no kinetic preferences corresponding to anabolic or catabolic functions, but likely involved in BCAA catabolism. This Humulus lupulus (European hop) protein is Branched-chain amino acid aminotransferase 1, mitochondrial.